We begin with the raw amino-acid sequence, 572 residues long: MIKNTVRIINKNSNTFINIRNNNNNNINSSLKSGFGTIKRFNTTLNHNSSNSNIQTPISINSTIINNNNNSNNNNSNNIINNDLNVVKFSTISTPNSILDTLNENHSNQTNNVNNKNYNNNNNNFEKDDKFGPPNNQNNNKLDLDTSKLYVSKSTGELFFTFMILKVCSINFISDNSQKFLNLFEKLGLSKPLNFFIKYSFFKQFCAGETIRETEIFTEKLNKLGIGTILDYAIEELAGSSEGFDSVAENICETIRVAAKNPTNSFSCVKFTGLVTPSVLEKMNTLVSNVTTNVSELPIESFNSPLDFYLNQSSSLMKQGSEPLLTSKDIKEIKEFFNRMDKIFQLCHQRGVPILVDAEQSYYQVAIHHLTMSYSIKYNKEKPIIYNTYQMYLVNGMNVLKQHFELSSSQKFNFKLGAKIVRGAYMVTESERSQRLSTENPVLPTIQDTHKSYNTALDFLLNQIKSDPNSIGLMIASHNEDSINLGTKLIKQYKIDPTNPNIQFGQLFGMADFLSFNLVDQHQRIFKYVPFGPVEEVLPYLIRRMHENKGFIGSNSDKELFYLKKEIKRRLF.

A compositionally biased stretch (low complexity) spans 105–124 (NHSNQTNNVNNKNYNNNNNN). The interval 105-140 (NHSNQTNNVNNKNYNNNNNNFEKDDKFGPPNNQNNN) is disordered.

The protein belongs to the proline oxidase family. FAD serves as cofactor.

The protein resides in the mitochondrion matrix. It catalyses the reaction L-proline + a quinone = (S)-1-pyrroline-5-carboxylate + a quinol + H(+). It participates in amino-acid degradation; L-proline degradation into L-glutamate; L-glutamate from L-proline: step 1/2. Converts proline to delta-1-pyrroline-5-carboxylate. The sequence is that of Proline dehydrogenase 1, mitochondrial (prodh) from Dictyostelium discoideum (Social amoeba).